The following is a 973-amino-acid chain: FHF complex subunit HOOK-interacting protein 1B (973 aa).

Disordered stretches follow at residues 466–493, 510–547, and 573–647; these read SSPS…VVTV, SLGG…PGEL, and SAPY…EGAK. S467 is subject to Phosphoserine. Over residues 482 to 493 the composition is skewed to low complexity; the sequence is SPSVDSSSVVTV. 4 positions are modified to phosphoserine: S510, S523, S529, and S533. 2 stretches are compositionally biased toward low complexity: residues 529–538 and 622–639; these read SPASSPGRRP and GARE…NGLP. Phosphoserine is present on residues S859 and S898.

The protein belongs to the FHIP family. As to quaternary structure, component of the FTS/Hook/FHIP complex (FHF complex), composed of AKTIP/FTS, FHIP1B, and one or more members of the Hook family of proteins HOOK1, HOOK2, and HOOK3. The FHF complex associates with the homotypic vesicular sorting complex (the HOPS complex).

Component of the FTS/Hook/FHIP complex (FHF complex). The FHF complex may function to promote vesicle trafficking and/or fusion via the homotypic vesicular protein sorting complex (the HOPS complex). FHF complex promotes the distribution of AP-4 complex to the perinuclear area of the cell. This is FHF complex subunit HOOK-interacting protein 1B (FHIP1B) from Bos taurus (Bovine).